The sequence spans 255 residues: Small ribosomal subunit protein eS1B (255 aa).

Residue Ala-2 is modified to N-acetylalanine; partial. Phosphoserine is present on Ser-245. Residue Lys-248 forms a Glycyl lysine isopeptide (Lys-Gly) (interchain with G-Cter in ubiquitin) linkage. Position 254 is a phosphothreonine (Thr-254).

The protein belongs to the eukaryotic ribosomal protein eS1 family. In terms of assembly, component of the small ribosomal subunit. Mature ribosomes consist of a small (40S) and a large (60S) subunit. The 40S subunit contains about 33 different proteins and 1 molecule of RNA (18S). The 60S subunit contains about 49 different proteins and 3 molecules of RNA (25S, 5.8S and 5S).

It localises to the cytoplasm. This Saccharomyces cerevisiae (strain JAY291) (Baker's yeast) protein is Small ribosomal subunit protein eS1B.